The following is a 307-amino-acid chain: Porphobilinogen deaminase (307 aa).

Cys-239 carries the S-(dipyrrolylmethanemethyl)cysteine modification.

It belongs to the HMBS family. As to quaternary structure, monomer. Dipyrromethane serves as cofactor.

The enzyme catalyses 4 porphobilinogen + H2O = hydroxymethylbilane + 4 NH4(+). The protein operates within porphyrin-containing compound metabolism; protoporphyrin-IX biosynthesis; coproporphyrinogen-III from 5-aminolevulinate: step 2/4. Tetrapolymerization of the monopyrrole PBG into the hydroxymethylbilane pre-uroporphyrinogen in several discrete steps. This chain is Porphobilinogen deaminase, found in Campylobacter jejuni subsp. jejuni serotype O:6 (strain 81116 / NCTC 11828).